Reading from the N-terminus, the 157-residue chain is 3-dehydroquinate dehydratase (157 aa).

Tyrosine 24 functions as the Proton acceptor in the catalytic mechanism. Substrate contacts are provided by asparagine 75, histidine 81, and aspartate 88. Histidine 101 (proton donor) is an active-site residue. Residues 102–103 (LS) and arginine 112 each bind substrate.

The protein belongs to the type-II 3-dehydroquinase family. In terms of assembly, homododecamer.

The catalysed reaction is 3-dehydroquinate = 3-dehydroshikimate + H2O. The protein operates within metabolic intermediate biosynthesis; chorismate biosynthesis; chorismate from D-erythrose 4-phosphate and phosphoenolpyruvate: step 3/7. Functionally, catalyzes a trans-dehydration via an enolate intermediate. In Brucella abortus (strain S19), this protein is 3-dehydroquinate dehydratase.